Here is a 354-residue protein sequence, read N- to C-terminus: MKISNICFSYQPPGESHQEVMERFIRLGVASEELNFDGFYTLEHHFTEFGITGNLYIACANILGRTKRIQVGTMGIVLPTEHPARHVESLLVLDQLSKGRFNYGTVRGLYHKDFRVFGTSQEDSRKTAENFYSMILDASKTGVLHTDGEVVEFPDVNVYPEAYSKKQPTCMTAESSETITYLAERGLPMVLSWIIPVSEKVSQMELYNEVAAEHGHDINNIEHILTFICSVNEDGEKADSVCRNFLENWYDSYKNATNIFNDSNQTRGYDYLKAQWREWVMKGLADPRRRLDYSNELNPVGTPERCIEIIQSNIDATGIKHITVGFEANGSEQEIRESMELFMEKVAPHLKDPQ.

It belongs to the bacterial luciferase oxidoreductase family. Heterodimer of an alpha and a beta chain.

It carries out the reaction a long-chain fatty aldehyde + FMNH2 + O2 = a long-chain fatty acid + hnu + FMN + H2O + 2 H(+). Functionally, light-emitting reaction in luminous bacteria. The polypeptide is Alkanal monooxygenase alpha chain (luxA) (Photobacterium leiognathi).